We begin with the raw amino-acid sequence, 1238 residues long: ATP-dependent helicase/nuclease subunit A (1238 aa).

Residues 12 to 490 (VSWTDDQWKA…IDLNANFRSR (479 aa)) form the UvrD-like helicase ATP-binding domain. ATP is bound at residue 33–40 (AAAGSGKT). The UvrD-like helicase C-terminal domain occupies 510-818 (GEILYDDNAS…RLVTIHSSKG (309 aa)).

The protein belongs to the helicase family. AddA subfamily. As to quaternary structure, heterodimer of AddA and AddB/RexB. It depends on Mg(2+) as a cofactor.

It catalyses the reaction Couples ATP hydrolysis with the unwinding of duplex DNA by translocating in the 3'-5' direction.. The catalysed reaction is ATP + H2O = ADP + phosphate + H(+). The heterodimer acts as both an ATP-dependent DNA helicase and an ATP-dependent, dual-direction single-stranded exonuclease. Recognizes the chi site generating a DNA molecule suitable for the initiation of homologous recombination. The AddA nuclease domain is required for chi fragment generation; this subunit has the helicase and 3' -&gt; 5' nuclease activities. The chain is ATP-dependent helicase/nuclease subunit A from Lysinibacillus sphaericus (strain C3-41).